The following is a 75-amino-acid chain: U14-hexatoxin-Mg1a (75 aa).

An N-terminal signal peptide occupies residues 1–19; it reads MKLTLFILIVFVVLANVYA. Positions 20 to 31 are excised as a propeptide; sequence AGISERNIIGGR.

Post-translationally, contains 4 disulfide bonds. Expressed by the venom gland.

It is found in the secreted. Its function is as follows. No toxicity is observed upon intracranial injection into mice and intrathorax injection into crickets. This Macrothele gigas (Japanese funnel web spider) protein is U14-hexatoxin-Mg1a.